The primary structure comprises 267 residues: MRSSARGRPLQAATAFFLSLFFFLRRFERGFWLWGGDSETKVYVGNLGTGAGKGELERAFSYYGPLRTVWIARNPPGFAFVEFEDPRDAEDAVRGLDGKVICGSRVRVELSTGMPRRSRFDRPPARRPFDPNDRCYECGEKGHYAYDCHRYSRRRRSRSRSRSHSRSRGRRYSRSRSRSRGRRSRSASPRRSRSVSLRRSRSASLRRSRSGSIIGSRYFQSRSRSRSRSRSISRPRSSRSKSRSPSPKRSRSPSGSPHRSASPERMD.

The region spanning 40–113 (TKVYVGNLGT…SRVRVELSTG (74 aa)) is the RRM domain. At lysine 53 the chain carries N6-acetyllysine; alternate. Lysine 53 is covalently cross-linked (Glycyl lysine isopeptide (Lys-Gly) (interchain with G-Cter in SUMO2); alternate). Serine 61 is modified (phosphoserine). The interval 110-127 (LSTGMPRRSRFDRPPARR) is sufficient for interaction with NXF1. The segment at 133 to 150 (DRCYECGEKGHYAYDCHR) adopts a CCHC-type zinc-finger fold. Residues 152–209 (SRRRRSRSRSRSHSRSRGRRYSRSRSRSRGRRSRSASPRRSRSVSLRRSRSASLRRSR) show a composition bias toward basic residues. The tract at residues 152–267 (SRRRRSRSRS…HRSASPERMD (116 aa)) is disordered. 4 repeat units span residues 182 to 189 (RRSRSASP), 190 to 197 (RRSRSVSL), 198 to 205 (RRSRSASL), and 206 to 213 (RRSRSGSI). The 6 X 8 AA repeats of R-R-S-R-S-X-S-X stretch occupies residues 182 to 255 (RRSRSASPRR…SPKRSRSPSG (74 aa)). A phosphoserine mark is found at serine 192, serine 194, and serine 196. Phosphoserine is present on residues serine 210, serine 212, serine 221, serine 223, and serine 225. Residues 223 to 251 (SRSRSRSRSISRPRSSRSKSRSPSPKRSR) are compositionally biased toward basic residues. The stretch at 240–247 (SKSRSPSP) is one 5; approximate repeat. The stretch at 248-255 (KRSRSPSG) is one 6; approximate repeat. Phosphoserine is present on residues serine 260 and serine 262.

The protein belongs to the splicing factor SR family. In terms of assembly, found in large molecular weight complexes containing CCNL1 and the p110 isoforms of either CDC2L1 or CDC2L2. Interacts with CCNL2 and CPSF6. Interacts with NXF1. Interacts with YTHDC1. Extensively phosphorylated on serine residues in the RS domain.

The protein resides in the nucleus. The protein localises to the cytoplasm. Its function is as follows. Required for pre-mRNA splicing. Represses the splicing of MAPT/Tau exon 10. May function as export adapter involved in mRNA nuclear export such as of histone H2A. Binds mRNA which is thought to be transferred to the NXF1-NXT1 heterodimer for export (TAP/NXF1 pathway); enhances NXF1-NXT1 RNA-binding activity. RNA-binding is semi-sequence specific. The sequence is that of Serine/arginine-rich splicing factor 7 (Srsf7) from Mus musculus (Mouse).